A 369-amino-acid chain; its full sequence is Ribonuclease 3 (369 aa).

The RNase III domain occupies Ile-6–Asp-142. Mg(2+) is bound at residue Glu-46. Residue Asp-50 is part of the active site. Residues Asp-128 and Glu-131 each coordinate Mg(2+). Glu-131 is an active-site residue. The region spanning Asn-272–Lys-341 is the DRBM domain.

It belongs to the ribonuclease III family. In terms of assembly, homodimer. Mg(2+) serves as cofactor.

The protein resides in the cytoplasm. It catalyses the reaction Endonucleolytic cleavage to 5'-phosphomonoester.. In terms of biological role, digests double-stranded RNA. Involved in the processing of primary rRNA transcript to yield the immediate precursors to the large and small rRNAs (23S and 16S). Processes some mRNAs, and tRNAs when they are encoded in the rRNA operon. Processes pre-crRNA and tracrRNA of type II CRISPR loci if present in the organism. The sequence is that of Ribonuclease 3 (rnc) from Treponema succinifaciens (strain ATCC 33096 / DSM 2489 / 6091).